The chain runs to 440 residues: Ribosomal protein uS12 methylthiotransferase RimO (440 aa).

An MTTase N-terminal domain is found at 8 to 118 (PTVGFVSLGC…VMGIVHTHLP (111 aa)). [4Fe-4S] cluster contacts are provided by C17, C53, C82, C149, C153, and C156. The region spanning 135–372 (LTPDHFAYLK…MQVQEDISAD (238 aa)) is the Radical SAM core domain. Residues 375–440 (AAKIDTVIQV…DHHDLYAQVV (66 aa)) enclose the TRAM domain.

It belongs to the methylthiotransferase family. RimO subfamily. [4Fe-4S] cluster is required as a cofactor.

Its subcellular location is the cytoplasm. It catalyses the reaction L-aspartate(89)-[ribosomal protein uS12]-hydrogen + (sulfur carrier)-SH + AH2 + 2 S-adenosyl-L-methionine = 3-methylsulfanyl-L-aspartate(89)-[ribosomal protein uS12]-hydrogen + (sulfur carrier)-H + 5'-deoxyadenosine + L-methionine + A + S-adenosyl-L-homocysteine + 2 H(+). Catalyzes the methylthiolation of an aspartic acid residue of ribosomal protein uS12. This is Ribosomal protein uS12 methylthiotransferase RimO from Dechloromonas aromatica (strain RCB).